Here is a 309-residue protein sequence, read N- to C-terminus: Probable pyridoxal 5'-phosphate synthase subunit PDX1 (309 aa).

D40 contacts D-ribose 5-phosphate. K97 serves as the catalytic Schiff-base intermediate with D-ribose 5-phosphate. A D-ribose 5-phosphate-binding site is contributed by G169. D-glyceraldehyde 3-phosphate is bound at residue R181. D-ribose 5-phosphate-binding positions include G230 and 251-252 (GS).

The protein belongs to the PdxS/SNZ family.

It catalyses the reaction aldehydo-D-ribose 5-phosphate + D-glyceraldehyde 3-phosphate + L-glutamine = pyridoxal 5'-phosphate + L-glutamate + phosphate + 3 H2O + H(+). The protein operates within cofactor biosynthesis; pyridoxal 5'-phosphate biosynthesis. Its function is as follows. Catalyzes the formation of pyridoxal 5'-phosphate from ribose 5-phosphate (RBP), glyceraldehyde 3-phosphate (G3P) and ammonia. The ammonia is provided by PDX2. Can also use ribulose 5-phosphate and dihydroxyacetone phosphate as substrates, resulting from enzyme-catalyzed isomerization of RBP and G3P, respectively. Also plays an indirect role in resistance to singlet oxygen-generating photosensitizers. This chain is Probable pyridoxal 5'-phosphate synthase subunit PDX1 (PDX1), found in Hevea brasiliensis (Para rubber tree).